Reading from the N-terminus, the 582-residue chain is Aspartate--tRNA ligase (582 aa).

Glu174 serves as a coordination point for L-aspartate. The aspartate stretch occupies residues 198 to 201 (QITK). Arg220 serves as a coordination point for L-aspartate. ATP-binding positions include 220–222 (RDE) and Gln229. Residue His443 participates in L-aspartate binding. Glu477 is a binding site for ATP. Position 484 (Arg484) interacts with L-aspartate. An ATP-binding site is contributed by 529–532 (GLDR).

Belongs to the class-II aminoacyl-tRNA synthetase family. Type 1 subfamily. As to quaternary structure, homodimer.

It localises to the cytoplasm. It carries out the reaction tRNA(Asp) + L-aspartate + ATP = L-aspartyl-tRNA(Asp) + AMP + diphosphate. In terms of biological role, catalyzes the attachment of L-aspartate to tRNA(Asp) in a two-step reaction: L-aspartate is first activated by ATP to form Asp-AMP and then transferred to the acceptor end of tRNA(Asp). This chain is Aspartate--tRNA ligase, found in Streptococcus pyogenes serotype M3 (strain ATCC BAA-595 / MGAS315).